A 205-amino-acid polypeptide reads, in one-letter code: Small ribosomal subunit protein uS4 (205 aa).

Residues 26–47 are disordered; it reads PVNKREYGPGQHGQRRKQKPSD. Residues 94–154 form the S4 RNA-binding domain; it reads RRLDAVVYRL…EKSKHLAIVL (61 aa).

It belongs to the universal ribosomal protein uS4 family. As to quaternary structure, part of the 30S ribosomal subunit. Contacts protein S5. The interaction surface between S4 and S5 is involved in control of translational fidelity.

Functionally, one of the primary rRNA binding proteins, it binds directly to 16S rRNA where it nucleates assembly of the body of the 30S subunit. Its function is as follows. With S5 and S12 plays an important role in translational accuracy. The sequence is that of Small ribosomal subunit protein uS4 from Gluconacetobacter diazotrophicus (strain ATCC 49037 / DSM 5601 / CCUG 37298 / CIP 103539 / LMG 7603 / PAl5).